The following is a 206-amino-acid chain: Musculin (206 aa).

The interval 1 to 115 (MSTGSVSDPE…QSQRNAANAR (115 aa)) is disordered. A compositionally biased stretch (acidic residues) spans 46–56 (SAEEEDPDGEE). Positions 71–76 (KRKRPR) match the Nuclear localization signal motif. Residues 78-92 (AGGGGAGGSAGGGGK) show a composition bias toward gly residues. Low complexity predominate over residues 93–102 (KPLPAKGSAA). A bHLH domain is found at 107-159 (SQRNAANARERARMRVLSKAFSRLKTSLPWVPPDTKLSKLDTLRLASSYIAHL).

As to quaternary structure, efficient DNA binding requires dimerization with another bHLH protein. Binds DNA as a homodimer or a heterodimer. Forms a heterodimer with TCF3. Expressed in lymphoid tissues, B-cell lines and activated B-cells.

It is found in the nucleus. Functionally, transcription repressor capable of inhibiting the transactivation capability of TCF3/E47. May play a role in regulating antigen-dependent B-cell differentiation. The protein is Musculin (MSC) of Homo sapiens (Human).